The sequence spans 260 residues: Thiazole synthase (260 aa).

The active-site Schiff-base intermediate with DXP is Lys-96. 1-deoxy-D-xylulose 5-phosphate-binding positions include Gly-157, 184 to 185 (AG), and 206 to 207 (NT).

This sequence belongs to the ThiG family. Homotetramer. Forms heterodimers with either ThiH or ThiS.

It localises to the cytoplasm. The enzyme catalyses [ThiS sulfur-carrier protein]-C-terminal-Gly-aminoethanethioate + 2-iminoacetate + 1-deoxy-D-xylulose 5-phosphate = [ThiS sulfur-carrier protein]-C-terminal Gly-Gly + 2-[(2R,5Z)-2-carboxy-4-methylthiazol-5(2H)-ylidene]ethyl phosphate + 2 H2O + H(+). It functions in the pathway cofactor biosynthesis; thiamine diphosphate biosynthesis. Catalyzes the rearrangement of 1-deoxy-D-xylulose 5-phosphate (DXP) to produce the thiazole phosphate moiety of thiamine. Sulfur is provided by the thiocarboxylate moiety of the carrier protein ThiS. In vitro, sulfur can be provided by H(2)S. The protein is Thiazole synthase of Nitrobacter hamburgensis (strain DSM 10229 / NCIMB 13809 / X14).